Here is a 350-residue protein sequence, read N- to C-terminus: Fe-S cluster assembly protein dre2 (350 aa).

The N-terminal SAM-like domain stretch occupies residues 23-156 (TSFNLRTLLL…KPDHSASVAV (134 aa)). Residues 157–242 (PLRLRRKDNS…EDTLLTEEDM (86 aa)) form a linker region. The disordered stretch occupies residues 165 to 209 (NSKTTAVSNAGPPVSTVEVPVSGKRKSVDMTEDVPEKDVPKNDVP). The span at 190–208 (KSVDMTEDVPEKDVPKNDV) shows a compositional bias: basic and acidic residues. [2Fe-2S] cluster is bound by residues Cys-252, Cys-263, Cys-266, and Cys-268. The tract at residues 252 to 268 (CAPRAGKRRRACKDCTC) is fe-S binding site A. [4Fe-4S] cluster is bound by residues Cys-313, Cys-316, Cys-324, and Cys-327. 2 short sequence motifs (cx2C motif) span residues 313-316 (CGNC) and 324-327 (CDGC). Residues 313–327 (CGNCSLGDAFRCDGC) are fe-S binding site B.

Belongs to the anamorsin family. Monomer. Interacts with TAH18. Interacts with MIA40. [2Fe-2S] cluster serves as cofactor. [4Fe-4S] cluster is required as a cofactor.

The protein resides in the cytoplasm. It is found in the mitochondrion intermembrane space. Its function is as follows. Component of the cytosolic iron-sulfur (Fe-S) protein assembly (CIA) machinery required for the maturation of extramitochondrial Fe-S proteins. Part of an electron transfer chain functioning in an early step of cytosolic Fe-S biogenesis, facilitating the de novo assembly of a [4Fe-4S] cluster on the scaffold complex CFD1-NBP35. Electrons are transferred to DRE2 from NADPH via the FAD- and FMN-containing protein TAH18. TAH18-DRE2 are also required for the assembly of the diferric tyrosyl radical cofactor of ribonucleotide reductase (RNR), probably by providing electrons for reduction during radical cofactor maturation in the catalytic small subunit RNR2. The chain is Fe-S cluster assembly protein dre2 from Sclerotinia sclerotiorum (strain ATCC 18683 / 1980 / Ss-1) (White mold).